A 129-amino-acid chain; its full sequence is Small ribosomal subunit protein bS6 (129 aa).

It belongs to the bacterial ribosomal protein bS6 family.

Its function is as follows. Binds together with bS18 to 16S ribosomal RNA. The protein is Small ribosomal subunit protein bS6 of Pelobacter propionicus (strain DSM 2379 / NBRC 103807 / OttBd1).